The following is a 214-amino-acid chain: MSNPRIEELPDNEEPTKQQVTAEDEGSDSSDSEGEGEVESGIPAGAGAVVHSRNEKKARKSIAKLGLTRVPGITRVTLRRPKNILFVINNPEVYKSPTSNTYIVFGEAKIEDLNSQAQASAAAQLAAQESHDHAGHDHSGHDHSHDHGKGKAVDTGDEKKEEEEDDTEEVDATGLEDKDIELVMTQASVSRNKAVKALKENDNDIVNSIMALSI.

2 disordered regions span residues 1–57 (MSNP…NEKK) and 119–179 (ASAA…EDKD). Positions 22–38 (AEDEGSDSSDSEGEGEV) are enriched in acidic residues. Residues 52–117 (SRNEKKARKS…AKIEDLNSQA (66 aa)) enclose the NAC-A/B domain. Over residues 119–128 (ASAAAQLAAQ) the composition is skewed to low complexity. Basic and acidic residues predominate over residues 129-159 (ESHDHAGHDHSGHDHSHDHGKGKAVDTGDEK). The segment covering 160 to 171 (KEEEEDDTEEVD) has biased composition (acidic residues). In terms of domain architecture, UBA spans 175–214 (LEDKDIELVMTQASVSRNKAVKALKENDNDIVNSIMALSI).

This sequence belongs to the NAC-alpha family. As to quaternary structure, part of the nascent polypeptide-associated complex (NAC), consisting of EGD2 and EGD1. NAC associates with ribosomes via EGD1.

Its subcellular location is the cytoplasm. It is found in the nucleus. Component of the nascent polypeptide-associated complex (NAC), a dynamic component of the ribosomal exit tunnel, protecting the emerging polypeptides from interaction with other cytoplasmic proteins to ensure appropriate nascent protein targeting. The NAC complex also promotes mitochondrial protein import by enhancing productive ribosome interactions with the outer mitochondrial membrane and blocks the inappropriate interaction of ribosomes translating non-secretory nascent polypeptides with translocation sites in the membrane of the endoplasmic reticulum. EGD2 may also be involved in transcription regulation. This is Nascent polypeptide-associated complex subunit alpha (egd2) from Sclerotinia sclerotiorum (strain ATCC 18683 / 1980 / Ss-1) (White mold).